We begin with the raw amino-acid sequence, 86 residues long: Small ribosomal subunit protein uS17 (86 aa).

Belongs to the universal ribosomal protein uS17 family. As to quaternary structure, part of the 30S ribosomal subunit.

In terms of biological role, one of the primary rRNA binding proteins, it binds specifically to the 5'-end of 16S ribosomal RNA. This is Small ribosomal subunit protein uS17 from Helicobacter acinonychis (strain Sheeba).